Consider the following 392-residue polypeptide: Phospho-N-acetylmuramoyl-pentapeptide-transferase (392 aa).

The next 10 membrane-spanning stretches (helical) occupy residues 24 to 44, 76 to 96, 100 to 120, 137 to 157, 193 to 213, 225 to 245, 262 to 282, 289 to 309, 314 to 334, and 369 to 389; these read YLTFRAVMAAMTALLIGLLAG, TMGGVLILGAIAISTLLWFDL, FVWVVLAVTLGFGAIGWVDDW, YFWQSVIGIVAALYLVFCISE, VSYPLGVLGFVILTYLVIVGS, GLAIMPVVMVGASLGVFAYVT, AGELLIFCSAMAGAGLAFLWF, VFMGDVGALALGGALGTIAII, IVLAIMGGIFVVEALSVMLQV, and QVVVRFWIITMLLCLIGLTTL.

Belongs to the glycosyltransferase 4 family. MraY subfamily. The cofactor is Mg(2+).

The protein resides in the cell inner membrane. The enzyme catalyses UDP-N-acetyl-alpha-D-muramoyl-L-alanyl-gamma-D-glutamyl-meso-2,6-diaminopimeloyl-D-alanyl-D-alanine + di-trans,octa-cis-undecaprenyl phosphate = di-trans,octa-cis-undecaprenyl diphospho-N-acetyl-alpha-D-muramoyl-L-alanyl-D-glutamyl-meso-2,6-diaminopimeloyl-D-alanyl-D-alanine + UMP. Its pathway is cell wall biogenesis; peptidoglycan biosynthesis. Its function is as follows. Catalyzes the initial step of the lipid cycle reactions in the biosynthesis of the cell wall peptidoglycan: transfers peptidoglycan precursor phospho-MurNAc-pentapeptide from UDP-MurNAc-pentapeptide onto the lipid carrier undecaprenyl phosphate, yielding undecaprenyl-pyrophosphoryl-MurNAc-pentapeptide, known as lipid I. The sequence is that of Phospho-N-acetylmuramoyl-pentapeptide-transferase from Paracidovorax citrulli (strain AAC00-1) (Acidovorax citrulli).